The chain runs to 325 residues: Biotin synthase (325 aa).

A Radical SAM core domain is found at 49-279; that stretch reads VGDKVELCSI…DKNIRYAGGR (231 aa). Positions 66, 70, and 73 each coordinate [4Fe-4S] cluster. The [2Fe-2S] cluster site is built by Cys-144, Cys-204, and Arg-274.

The protein belongs to the radical SAM superfamily. Biotin synthase family. In terms of assembly, homodimer. It depends on [4Fe-4S] cluster as a cofactor. [2Fe-2S] cluster serves as cofactor.

It catalyses the reaction (4R,5S)-dethiobiotin + (sulfur carrier)-SH + 2 reduced [2Fe-2S]-[ferredoxin] + 2 S-adenosyl-L-methionine = (sulfur carrier)-H + biotin + 2 5'-deoxyadenosine + 2 L-methionine + 2 oxidized [2Fe-2S]-[ferredoxin]. It functions in the pathway cofactor biosynthesis; biotin biosynthesis; biotin from 7,8-diaminononanoate: step 2/2. In terms of biological role, catalyzes the conversion of dethiobiotin (DTB) to biotin by the insertion of a sulfur atom into dethiobiotin via a radical-based mechanism. The sequence is that of Biotin synthase from Carboxydothermus hydrogenoformans (strain ATCC BAA-161 / DSM 6008 / Z-2901).